The sequence spans 343 residues: GTPase Obg (343 aa).

One can recognise an Obg domain in the interval 1–159 (MKFVDSASIF…LQLDMELKLM (159 aa)). The segment at 121-144 (GHGGRGNQHFATSTNQAPRRSEPG) is disordered. Residues 129–138 (HFATSTNQAP) show a composition bias toward polar residues. An OBG-type G domain is found at 160-323 (ADVGLVGFPN…LKDELWREVS (164 aa)). GTP-binding positions include 166-173 (GFPNAGKS), 191-195 (FTTLV), 213-216 (DIPG), 280-283 (TKMD), and 304-306 (SSV). Residues S173 and T193 each contribute to the Mg(2+) site. The disordered stretch occupies residues 322 to 343 (VSMRDRPEESSDPEGEGDGGTP). Residues 331–343 (SSDPEGEGDGGTP) are compositionally biased toward acidic residues.

This sequence belongs to the TRAFAC class OBG-HflX-like GTPase superfamily. OBG GTPase family. In terms of assembly, monomer. It depends on Mg(2+) as a cofactor.

It is found in the cytoplasm. Functionally, an essential GTPase which binds GTP, GDP and possibly (p)ppGpp with moderate affinity, with high nucleotide exchange rates and a fairly low GTP hydrolysis rate. Plays a role in control of the cell cycle, stress response, ribosome biogenesis and in those bacteria that undergo differentiation, in morphogenesis control. The protein is GTPase Obg of Chlorobium luteolum (strain DSM 273 / BCRC 81028 / 2530) (Pelodictyon luteolum).